Reading from the N-terminus, the 153-residue chain is Putative pre-16S rRNA nuclease (153 aa).

It belongs to the YqgF nuclease family.

Its subcellular location is the cytoplasm. Functionally, could be a nuclease involved in processing of the 5'-end of pre-16S rRNA. The chain is Putative pre-16S rRNA nuclease from Prochlorococcus marinus (strain SARG / CCMP1375 / SS120).